A 350-amino-acid chain; its full sequence is Opsin, longwave 563 nm (350 aa).

Over 1 to 45 (HRLAGRHPQDNYEDSTQSSIFTYTNSNSTRGPFEGPNYHIAPRWV) the chain is Extracellular. N-linked (GlcNAc...) asparagine glycosylation occurs at asparagine 27. The chain crosses the membrane as a helical span at residues 46-70 (YHLTSVWMLFVVVASVFTNGLVLAA). Over 71–82 (TMKFKKLRHPLN) the chain is Cytoplasmic. The chain crosses the membrane as a helical span at residues 83 to 108 (WILVNLAIADLAETVIASTISVVNQV). The Extracellular portion of the chain corresponds to 109–122 (HGYFVLGHPMCVLE). Cysteine 119 and cysteine 196 form a disulfide bridge. A helical membrane pass occupies residues 123–142 (GYTVSLCGITGLWSLAIISW). Residues 143 to 161 (ERWLVVCKPFGNVRFDAKL) lie on the Cytoplasmic side of the membrane. Residues 162 to 185 (AIVGVAFSWIWSAVWTAPPIFGWS) traverse the membrane as a helical segment. Residues 186-211 (RYWPHGLKTSCGPDVFSGSSYPGVQS) are Extracellular-facing. The chain crosses the membrane as a helical span at residues 212 to 239 (YMIVLMITCCFLPLGIIVLCYLQVWLAI). At 240-261 (RAVAKQQKESESTQKAEKEVTR) the chain is on the cytoplasmic side. A helical membrane pass occupies residues 262 to 285 (MVVVMIVAYCVCWGPYTFFACFAA). Over 286–293 (ANPGYAFH) the chain is Extracellular. Residues 294 to 318 (PLMAALPAYFAKSATIYNPIIYVFM) traverse the membrane as a helical segment. Lysine 305 is modified (N6-(retinylidene)lysine). Topologically, residues 319-350 (NRQFRNCILQLFGKKVDDGSELSSASKTEVSS) are cytoplasmic.

Belongs to the G-protein coupled receptor 1 family. Opsin subfamily. Phosphorylated on some or all of the serine and threonine residues present in the C-terminal region. As to expression, the color pigments are found in the cone photoreceptor cells.

The protein localises to the membrane. In terms of biological role, visual pigments are the light-absorbing molecules that mediate vision. They consist of an apoprotein, opsin, covalently linked to cis-retinal. This is Opsin, longwave 563 nm from Callithrix jacchus (White-tufted-ear marmoset).